The sequence spans 97 residues: U6-theraphotoxin-Hhn1a 1 (97 aa).

A signal peptide spans 1–33; the sequence is MLIKQFSRRSKNMKVQILLAFAALFVLAVGSYA. A propeptide spanning residues 34–61 is cleaved from the precursor; it reads SESKKLDLRDALFSAMFSADYQLNPQER. Cystine bridges form between cysteine 63–cysteine 77, cysteine 70–cysteine 82, and cysteine 76–cysteine 89.

The protein belongs to the neurotoxin 10 (Hwtx-1) family. 12 (Hntx-12) subfamily. As to expression, expressed by the venom gland.

It localises to the secreted. Ion channel inhibitor. In Cyriopagopus hainanus (Chinese bird spider), this protein is U6-theraphotoxin-Hhn1a 1.